Here is a 199-residue protein sequence, read N- to C-terminus: GTP cyclohydrolase-2 (199 aa).

Position 49 to 53 (49 to 53 (RVHSE)) interacts with GTP. Zn(2+) is bound by residues Cys-54, Cys-65, and Cys-67. Residues Gln-70, 92–94 (EGR), and Thr-114 each bind GTP. Asp-126 serves as the catalytic Proton acceptor. Residue Arg-128 is the Nucleophile of the active site. Positions 149 and 154 each coordinate GTP.

This sequence belongs to the GTP cyclohydrolase II family. Zn(2+) serves as cofactor.

The catalysed reaction is GTP + 4 H2O = 2,5-diamino-6-hydroxy-4-(5-phosphoribosylamino)-pyrimidine + formate + 2 phosphate + 3 H(+). It participates in cofactor biosynthesis; riboflavin biosynthesis; 5-amino-6-(D-ribitylamino)uracil from GTP: step 1/4. Catalyzes the conversion of GTP to 2,5-diamino-6-ribosylamino-4(3H)-pyrimidinone 5'-phosphate (DARP), formate and pyrophosphate. The polypeptide is GTP cyclohydrolase-2 (Baumannia cicadellinicola subsp. Homalodisca coagulata).